Consider the following 367-residue polypeptide: Female-specific protein transformer (367 aa).

Positions 86 to 280 are disordered; it reads ESISSKKIKS…HRHHRSQERS (195 aa). The segment covering 109-129 has biased composition (polar residues); sequence VKQNSPDVTQKFTKKYGSSEN. A compositionally biased stretch (basic and acidic residues) spans 130–144; it reads PDFRRHSSYEKDNYH. Over residues 195-223 the composition is skewed to basic residues; sequence NRRRSSHRSRRGSGSPRSRRYTSRHRRRS. A compositionally biased stretch (basic and acidic residues) spans 229–238; it reads TSWKHNPEHR. Residues 239-257 are compositionally biased toward basic residues; that stretch reads TSRRSRTRSPRGNRSRRRS.

Sex differentiation protein controlling female somatic sexual differentiation. May act by promoting the formation of a splicing enhancer complex. The sequence is that of Female-specific protein transformer from Musca domestica (House fly).